Consider the following 116-residue polypeptide: G antigen 2B/2C (116 aa).

The interval 1–116 is disordered; that stretch reads MSWRGRSTYR…PEEGEKQSQC (116 aa). Acidic residues-rich tracts occupy residues 31 to 44 and 86 to 95; these read FSDE…EEGE and ECEDGPDGQE. Residues 102–116 show a composition bias toward basic and acidic residues; it reads EEVKTPEEGEKQSQC.

This sequence belongs to the GAGE family. As to expression, expressed in a variety of tumor tissues but not in normal tissues, except testis.

In terms of biological role, antigen, recognized on melanoma by autologous cytolytic T-lymphocytes. This Homo sapiens (Human) protein is G antigen 2B/2C (GAGE2B).